A 264-amino-acid chain; its full sequence is uncharacterized protein (264 aa).

An N-terminal signal peptide occupies residues 1-21 (MMWNYFVTCIVLYANIISIHT). A disordered region spans residues 182–247 (QQPNAAQVPT…AANNGLDLTS (66 aa)). Over residues 190–213 (PTTSQQQPTSNTGGQQPPTNASNP) the composition is skewed to low complexity. A glycan (N-linked (GlcNAc...) asparagine) is linked at asparagine 209. Residues 214 to 226 (PTNPQPTPTPAQP) show a composition bias toward pro residues. Polar residues predominate over residues 230-247 (GTQVQQTPAANNGLDLTS).

Component of the acid-insoluble and acid-soluble organic matrix of calcified layers of the shell (at protein level).

It localises to the secreted. This is an uncharacterized protein from Lottia gigantea (Giant owl limpet).